The following is a 195-amino-acid chain: Chromophore lyase CpcT/CpeT 2 (195 aa).

This sequence belongs to the CpcT/CpeT biliprotein lyase family.

In terms of biological role, covalently attaches a chromophore to Cys residue(s) of phycobiliproteins. The polypeptide is Chromophore lyase CpcT/CpeT 2 (Trichodesmium erythraeum (strain IMS101)).